A 116-amino-acid polypeptide reads, in one-letter code: Dynein light chain Tctex-type 3 (116 aa).

Tyr4 is subject to 3'-nitrotyrosine.

This sequence belongs to the dynein light chain Tctex-type family. Homodimer. The cytoplasmic dynein 1 complex consists of two catalytic heavy chains (HCs) and a number of non-catalytic subunits presented by intermediate chains (ICs), light intermediate chains (LICs) and light chains (LCs); the composition seems to vary in respect to the IC, LIC and LC composition. The heavy chain homodimer serves as a scaffold for the probable homodimeric assembly of the respective non-catalytic subunits. The ICs and LICs bind directly to the HC dimer and the LCs assemble on the IC dimer. DYNLT1 and DYNLT3 compete for association with dynein IC (DYNC1I1 or DYNC1I2). Self-associates. Interacts with DYNC1I1 and DYNC1I2. Interacts with BUB3. Interacts with SATB1 in nucleus to form complex with matrix attachment regions (MARs) of DNA.

It is found in the nucleus. The protein localises to the cytoplasm. The protein resides in the cytoskeleton. Its subcellular location is the chromosome. It localises to the centromere. It is found in the kinetochore. Acts as one of several non-catalytic accessory components of the cytoplasmic dynein 1 complex that are thought to be involved in linking dynein to cargos and to adapter proteins that regulate dynein function. Cytoplasmic dynein 1 acts as a motor for the intracellular retrograde motility of vesicles and organelles along microtubules. Probably binds BUB3 as part of transport cargo. Required for the efficient progression through mitosis. This is Dynein light chain Tctex-type 3 (Dynlt3) from Mus musculus (Mouse).